A 273-amino-acid chain; its full sequence is 2,3,4,5-tetrahydropyridine-2,6-dicarboxylate N-succinyltransferase (273 aa).

Positions 104 and 141 each coordinate substrate.

It belongs to the transferase hexapeptide repeat family. Homotrimer.

The protein localises to the cytoplasm. It catalyses the reaction (S)-2,3,4,5-tetrahydrodipicolinate + succinyl-CoA + H2O = (S)-2-succinylamino-6-oxoheptanedioate + CoA. Its pathway is amino-acid biosynthesis; L-lysine biosynthesis via DAP pathway; LL-2,6-diaminopimelate from (S)-tetrahydrodipicolinate (succinylase route): step 1/3. In Nitrosomonas europaea (strain ATCC 19718 / CIP 103999 / KCTC 2705 / NBRC 14298), this protein is 2,3,4,5-tetrahydropyridine-2,6-dicarboxylate N-succinyltransferase.